A 306-amino-acid chain; its full sequence is MSNEFINFEKISRESWKTLHQKAKALLTQEELKSITSLNDNISINDVIDIYLPLINLIQVYKIAQENLSFSKSLFLKKDIQLRPFIIGISGSVAVGKSTTSRLLQLLLSRTHPNSQVELVTTDGFLYPNQFLIEQGLLNRKGFPESYNMELLLDFLDSIKNGQTAFAPVYSHDIYDIIPNQKQSFNNPDFLIVEGINVFQNQQNNRLYMSDYFDFSIYIDADSSHIETWYIERFLSILKLAKCDPHNYYAQYAQLPRSEAIAFARNVWKTVNLENLEKFIEPTRNRAELILHKSADHKIDEIYLKK.

91-98 (GSVAVGKS) is an ATP binding site.

Belongs to the prokaryotic pantothenate kinase family.

The protein resides in the cytoplasm. It carries out the reaction (R)-pantothenate + ATP = (R)-4'-phosphopantothenate + ADP + H(+). Its pathway is cofactor biosynthesis; coenzyme A biosynthesis; CoA from (R)-pantothenate: step 1/5. The sequence is that of Pantothenate kinase from Streptococcus pyogenes serotype M12 (strain MGAS2096).